A 260-amino-acid chain; its full sequence is Thrombin-like enzyme 2 (260 aa).

The N-terminal stretch at 1-18 is a signal peptide; sequence MMLIRVLANLLILQLSYA. Positions 19 to 24 are excised as a propeptide; the sequence is QKSSEL. One can recognise a Peptidase S1 domain in the interval 25-251; the sequence is VIGGDECNIN…HLDWIQSIIA (227 aa). Cystine bridges form between cysteine 31–cysteine 165, cysteine 52–cysteine 68, cysteine 102–cysteine 258, cysteine 144–cysteine 212, cysteine 176–cysteine 191, and cysteine 202–cysteine 227. The active-site Charge relay system is histidine 67. N-linked (GlcNAc...) asparagine glycosylation is present at asparagine 105. Aspartate 112 serves as the catalytic Charge relay system. Residues asparagine 156 and asparagine 172 are each glycosylated (N-linked (GlcNAc...) asparagine). The active-site Charge relay system is serine 206. N-linked (GlcNAc...) asparagine glycosylation occurs at asparagine 253.

The protein belongs to the peptidase S1 family. Snake venom subfamily. In terms of assembly, monomer. In terms of tissue distribution, expressed by the venom gland.

The protein localises to the secreted. In terms of biological role, thrombin-like snake venom serine protease. The chain is Thrombin-like enzyme 2 from Trimeresurus albolabris (White-lipped pit viper).